The primary structure comprises 317 residues: Acetyl-coenzyme A carboxylase carboxyl transferase subunit alpha (317 aa).

The 254-residue stretch at 40–293 (LEVRVREAIV…GDVIANALGE (254 aa)) folds into the CoA carboxyltransferase C-terminal domain.

Belongs to the AccA family. Acetyl-CoA carboxylase is a heterohexamer composed of biotin carboxyl carrier protein (AccB), biotin carboxylase (AccC) and two subunits each of ACCase subunit alpha (AccA) and ACCase subunit beta (AccD).

The protein localises to the cytoplasm. It catalyses the reaction N(6)-carboxybiotinyl-L-lysyl-[protein] + acetyl-CoA = N(6)-biotinyl-L-lysyl-[protein] + malonyl-CoA. It functions in the pathway lipid metabolism; malonyl-CoA biosynthesis; malonyl-CoA from acetyl-CoA: step 1/1. Component of the acetyl coenzyme A carboxylase (ACC) complex. First, biotin carboxylase catalyzes the carboxylation of biotin on its carrier protein (BCCP) and then the CO(2) group is transferred by the carboxyltransferase to acetyl-CoA to form malonyl-CoA. This is Acetyl-coenzyme A carboxylase carboxyl transferase subunit alpha from Rhizobium leguminosarum bv. trifolii (strain WSM2304).